Consider the following 142-residue polypeptide: MKTFTAKKETVERDWYLVNADGKTLGRLATELARRLRGKHKPEYTPHVDTGDYLIVINAEKISVTGKKRKDKIYYRHTGYVGGIKQTTFEEMIARHPERVIEIAVKGMLPKGPLGRAMYRKLKVYKGATHHHIAQQPKVLNI.

This sequence belongs to the universal ribosomal protein uL13 family. In terms of assembly, part of the 50S ribosomal subunit.

Its function is as follows. This protein is one of the early assembly proteins of the 50S ribosomal subunit, although it is not seen to bind rRNA by itself. It is important during the early stages of 50S assembly. This is Large ribosomal subunit protein uL13 from Hamiltonella defensa subsp. Acyrthosiphon pisum (strain 5AT).